The primary structure comprises 229 residues: Translation initiation factor IF-3 (229 aa).

Disordered regions lie at residues 1 to 21 and 184 to 229; these read MAIQQRDSRGGTNRDARTNRR and QAQR…AGPR. A compositionally biased stretch (low complexity) spans 192 to 203; it reads AAAQAAPAAAPQ. Residues 204-221 show a composition bias toward pro residues; the sequence is PGAPAAPPAAPAPAPAPE.

This sequence belongs to the IF-3 family. Monomer.

The protein resides in the cytoplasm. In terms of biological role, IF-3 binds to the 30S ribosomal subunit and shifts the equilibrium between 70S ribosomes and their 50S and 30S subunits in favor of the free subunits, thus enhancing the availability of 30S subunits on which protein synthesis initiation begins. The polypeptide is Translation initiation factor IF-3 (Anaeromyxobacter sp. (strain Fw109-5)).